Consider the following 423-residue polypeptide: D-tagatose-1,6-bisphosphate aldolase subunit GatZ (423 aa).

This sequence belongs to the GatZ/KbaZ family. GatZ subfamily. Forms a complex with GatY.

The protein operates within carbohydrate metabolism; D-tagatose 6-phosphate degradation; D-glyceraldehyde 3-phosphate and glycerone phosphate from D-tagatose 6-phosphate: step 2/2. Its function is as follows. Component of the tagatose-1,6-bisphosphate aldolase GatYZ that is required for full activity and stability of the Y subunit. Could have a chaperone-like function for the proper and stable folding of GatY. When expressed alone, GatZ does not show any aldolase activity. Is involved in the catabolism of galactitol. The protein is D-tagatose-1,6-bisphosphate aldolase subunit GatZ of Klebsiella pneumoniae subsp. pneumoniae (strain ATCC 700721 / MGH 78578).